The chain runs to 395 residues: Immunoglobulin heavy constant gamma 2 (395 aa).

The CH1 stretch occupies residues 1-98 (ASTKGPSVFP…PSNTKVDKTV (98 aa)). Topologically, residues 1 to 346 (ASTKGPSVFP…DGELDGLWTT (346 aa)) are extracellular. Ig-like domains are found at residues 6–99 (PSVF…KTVE), 117–216 (PSVF…KTIS), and 225–321 (PQVY…KSLS). A disulfide bridge links Cys-27 with Cys-83. The tract at residues 99–110 (ERKCCVECPPCP) is hinge. The interval 111-219 (APPVAGPSVF…PIEKTISKTK (109 aa)) is CH2. 2 cysteine pairs are disulfide-bonded: Cys-140–Cys-200 and Cys-246–Cys-304. An N-linked (GlcNAc...) (complex) asparagine glycan is attached at Asn-176. A CH3 region spans residues 220–326 (GQPREPQVYT…QKSLSLSPEL (107 aa)). A helical transmembrane segment spans residues 347 to 367 (ITIFITLFLLSVCYSATITFF). At 368–395 (KVKWIFSSVVDLKQTIVPDYRNMIRQGA) the chain is on the cytoplasmic side.

As to quaternary structure, immunoglobulins are composed of two identical heavy chains and two identical light chains; disulfide-linked. Glycosylation on Asn-176 is required for interaction with Fc receptors and ability to activate the complement pathway. Post-translationally, (Microbial infection) Deglycosylation on Asn-176 by S.pyogenes EndoS or Endos2 endoglucosidases prevents interaction between immunoglobulin-gamma (IgG) and Fc receptors, impairing ability to activate the complement pathway.

The protein localises to the secreted. It is found in the cell membrane. Its function is as follows. Constant region of immunoglobulin heavy chains. Immunoglobulins, also known as antibodies, are membrane-bound or secreted glycoproteins produced by B lymphocytes. In the recognition phase of humoral immunity, the membrane-bound immunoglobulins serve as receptors which, upon binding of a specific antigen, trigger the clonal expansion and differentiation of B lymphocytes into immunoglobulins-secreting plasma cells. Secreted immunoglobulins mediate the effector phase of humoral immunity, which results in the elimination of bound antigens. The antigen binding site is formed by the variable domain of one heavy chain, together with that of its associated light chain. Thus, each immunoglobulin has two antigen binding sites with remarkable affinity for a particular antigen. The variable domains are assembled by a process called V-(D)-J rearrangement and can then be subjected to somatic hypermutations which, after exposure to antigen and selection, allow affinity maturation for a particular antigen. The sequence is that of Immunoglobulin heavy constant gamma 2 from Homo sapiens (Human).